Consider the following 401-residue polypeptide: Argininosuccinate synthase (401 aa).

ATP-binding positions include 11–19 (AYSGGLDTS) and Ala-38. L-citrulline is bound by residues Tyr-89 and Ser-94. Gly-119 serves as a coordination point for ATP. Positions 121, 125, and 126 each coordinate L-aspartate. Asn-125 contacts L-citrulline. L-citrulline contacts are provided by Arg-129, Ser-180, Ser-189, Glu-265, and Tyr-277.

Belongs to the argininosuccinate synthase family. Type 1 subfamily. As to quaternary structure, homotetramer.

It is found in the cytoplasm. It catalyses the reaction L-citrulline + L-aspartate + ATP = 2-(N(omega)-L-arginino)succinate + AMP + diphosphate + H(+). It functions in the pathway amino-acid biosynthesis; L-arginine biosynthesis; L-arginine from L-ornithine and carbamoyl phosphate: step 2/3. This is Argininosuccinate synthase from Syntrophus aciditrophicus (strain SB).